We begin with the raw amino-acid sequence, 431 residues long: Na(+)/H(+) antiporter NhaA 1 (431 aa).

11 consecutive transmembrane segments (helical) span residues 17 to 37 (LSGI…NSNF), 56 to 76 (FIIS…LFFL), 98 to 118 (MFPF…YIAL), 123 to 143 (FIGF…MLIL), 154 to 174 (LFLV…VATV), 182 to 202 (EYFL…YFDV), 209 to 229 (LFLG…ATIA), 301 to 321 (FSAF…LLDF), 329 to 349 (MIVL…IFGF), 373 to 393 (VGFI…LAFI), and 400 to 420 (AIKI…MILI).

It belongs to the NhaA Na(+)/H(+) (TC 2.A.33) antiporter family.

It localises to the cell inner membrane. It catalyses the reaction Na(+)(in) + 2 H(+)(out) = Na(+)(out) + 2 H(+)(in). Functionally, na(+)/H(+) antiporter that extrudes sodium in exchange for external protons. The protein is Na(+)/H(+) antiporter NhaA 1 of Aliarcobacter butzleri (strain RM4018) (Arcobacter butzleri).